Here is a 241-residue protein sequence, read N- to C-terminus: 1-(5-phosphoribosyl)-5-[(5-phosphoribosylamino)methylideneamino] imidazole-4-carboxamide isomerase (241 aa).

Residue D10 is the Proton acceptor of the active site. The active-site Proton donor is D131.

Belongs to the HisA/HisF family.

It is found in the cytoplasm. It catalyses the reaction 1-(5-phospho-beta-D-ribosyl)-5-[(5-phospho-beta-D-ribosylamino)methylideneamino]imidazole-4-carboxamide = 5-[(5-phospho-1-deoxy-D-ribulos-1-ylimino)methylamino]-1-(5-phospho-beta-D-ribosyl)imidazole-4-carboxamide. The protein operates within amino-acid biosynthesis; L-histidine biosynthesis; L-histidine from 5-phospho-alpha-D-ribose 1-diphosphate: step 4/9. In Bifidobacterium adolescentis (strain ATCC 15703 / DSM 20083 / NCTC 11814 / E194a), this protein is 1-(5-phosphoribosyl)-5-[(5-phosphoribosylamino)methylideneamino] imidazole-4-carboxamide isomerase.